Reading from the N-terminus, the 386-residue chain is Outer membrane protein assembly factor BamB (386 aa).

Positions 1–20 (MKKLFNQVLVAAGVLALLAG) are cleaved as a signal peptide. Cysteine 21 carries N-palmitoyl cysteine lipidation. Cysteine 21 is lipidated: S-diacylglycerol cysteine.

It belongs to the BamB family. In terms of assembly, part of the Bam complex.

The protein resides in the cell outer membrane. In terms of biological role, part of the outer membrane protein assembly complex, which is involved in assembly and insertion of beta-barrel proteins into the outer membrane. This chain is Outer membrane protein assembly factor BamB, found in Vibrio cholerae serotype O1 (strain ATCC 39315 / El Tor Inaba N16961).